The sequence spans 572 residues: RNA polymerase sigma factor sigB (572 aa).

The transit peptide at 1 to 39 (MSSCLLPQFKCPPDSFSIHFRTSFCAPKHNKGSVFFQPQ) directs the protein to the chloroplast. The segment at 215–249 (TRQTERKARRAKGLEKTASGIPSVKTGSSPKKKRL) is disordered. Residues 360–373 (DLVQEGCRGLVRGA) carry the Polymerase core binding motif. The segment at residues 530–549 (LQEIGEMMGVSRERVRQIES) is a DNA-binding region (H-T-H motif).

It belongs to the sigma-70 factor family. In terms of tissue distribution, highly expressed in cotyledons, to a lesser extent in leaves, sepals and siliques, and barely expressed in roots. Present in seedlings.

The protein resides in the plastid. It localises to the chloroplast. In terms of biological role, required for the transition of plastids into chloroplasts by coordinating nuclear and chloroplastic genomes under light conditions. Sigma factors are initiation factors that promote the attachment of plastid-encoded RNA polymerase (PEP) to specific initiation sites and are then released. Promotes the biosynthesis of plastid-encoded tRNAs (e.g. trnE-UUC and trnV-UAC). This is RNA polymerase sigma factor sigB (SIGB) from Arabidopsis thaliana (Mouse-ear cress).